The chain runs to 315 residues: MEVIKITPRGYCYGVVDAMVIARNVALDPTLPRPIYILGMIVHNKHVTDAFAEEGIITLDGENRLEILEKIDKGTVIFTAHGVSPEVKRRAREKGLVTIDATCPDVTKTHNLIKEKLADGYEIIYIGKKGHPEPEGAVGIDPTRIHLVETMEDVERLTIENDRIMVTNQTTMSQWDVADIMAKVKEKYPHVEMHKEICMATQLRQEAVAEQAKDADVTIVVGDPRSNNSNRLAQVSEEIAGTKAYRVADVTEIDINWIKDAKKVAVTAGASTPTPITKEVIDFLEQFDPNDPNTWKRERKVPLQKILPKVKAKKE.

A [4Fe-4S] cluster-binding site is contributed by cysteine 12. (2E)-4-hydroxy-3-methylbut-2-enyl diphosphate-binding residues include histidine 43 and histidine 81. Dimethylallyl diphosphate is bound by residues histidine 43 and histidine 81. Residues histidine 43 and histidine 81 each coordinate isopentenyl diphosphate. Residue cysteine 103 participates in [4Fe-4S] cluster binding. Residue histidine 131 participates in (2E)-4-hydroxy-3-methylbut-2-enyl diphosphate binding. Dimethylallyl diphosphate is bound at residue histidine 131. Histidine 131 is a binding site for isopentenyl diphosphate. The Proton donor role is filled by glutamate 133. Threonine 170 contacts (2E)-4-hydroxy-3-methylbut-2-enyl diphosphate. [4Fe-4S] cluster is bound at residue cysteine 198. Serine 226, asparagine 228, and serine 271 together coordinate (2E)-4-hydroxy-3-methylbut-2-enyl diphosphate. Residues serine 226, asparagine 228, and serine 271 each contribute to the dimethylallyl diphosphate site. The isopentenyl diphosphate site is built by serine 226, asparagine 228, and serine 271.

The protein belongs to the IspH family. It depends on [4Fe-4S] cluster as a cofactor.

It carries out the reaction isopentenyl diphosphate + 2 oxidized [2Fe-2S]-[ferredoxin] + H2O = (2E)-4-hydroxy-3-methylbut-2-enyl diphosphate + 2 reduced [2Fe-2S]-[ferredoxin] + 2 H(+). The catalysed reaction is dimethylallyl diphosphate + 2 oxidized [2Fe-2S]-[ferredoxin] + H2O = (2E)-4-hydroxy-3-methylbut-2-enyl diphosphate + 2 reduced [2Fe-2S]-[ferredoxin] + 2 H(+). It participates in isoprenoid biosynthesis; dimethylallyl diphosphate biosynthesis; dimethylallyl diphosphate from (2E)-4-hydroxy-3-methylbutenyl diphosphate: step 1/1. Its pathway is isoprenoid biosynthesis; isopentenyl diphosphate biosynthesis via DXP pathway; isopentenyl diphosphate from 1-deoxy-D-xylulose 5-phosphate: step 6/6. Functionally, catalyzes the conversion of 1-hydroxy-2-methyl-2-(E)-butenyl 4-diphosphate (HMBPP) into a mixture of isopentenyl diphosphate (IPP) and dimethylallyl diphosphate (DMAPP). Acts in the terminal step of the DOXP/MEP pathway for isoprenoid precursor biosynthesis. In Geobacillus sp. (strain WCH70), this protein is 4-hydroxy-3-methylbut-2-enyl diphosphate reductase.